The chain runs to 469 residues: Coumaroyl-CoA:anthocyanidin 3-O-glucoside-6''-O-coumaroyltransferase 1 (469 aa).

Met1 carries the post-translational modification N-acetylmethionine. Catalysis depends on proton acceptor residues His173 and Asp410.

Belongs to the plant acyltransferase family. In terms of tissue distribution, highly expressed in flowers, leaves and roots. Lower levels of expression in stems and siliques.

Functionally, involved in the acylation of the 6'' position of the 3-O-glucose residue of anthocyanin. Also able to use flavonol 3-glucosides as the acyl acceptor. This Arabidopsis thaliana (Mouse-ear cress) protein is Coumaroyl-CoA:anthocyanidin 3-O-glucoside-6''-O-coumaroyltransferase 1 (3AT1).